A 156-amino-acid chain; its full sequence is S-ribosylhomocysteine lyase (156 aa).

Fe cation is bound by residues His56, His60, and Cys123.

This sequence belongs to the LuxS family. In terms of assembly, homodimer. Fe cation is required as a cofactor.

The enzyme catalyses S-(5-deoxy-D-ribos-5-yl)-L-homocysteine = (S)-4,5-dihydroxypentane-2,3-dione + L-homocysteine. Its function is as follows. Involved in the synthesis of autoinducer 2 (AI-2) which is secreted by bacteria and is used to communicate both the cell density and the metabolic potential of the environment. The regulation of gene expression in response to changes in cell density is called quorum sensing. Catalyzes the transformation of S-ribosylhomocysteine (RHC) to homocysteine (HC) and 4,5-dihydroxy-2,3-pentadione (DPD). This is S-ribosylhomocysteine lyase from Staphylococcus epidermidis (strain ATCC 35984 / DSM 28319 / BCRC 17069 / CCUG 31568 / BM 3577 / RP62A).